Here is a 347-residue protein sequence, read N- to C-terminus: Doublecortin domain-containing protein 2C (347 aa).

Doublecortin domains lie at 16 to 98 and 136 to 217; these read KTIL…LDYI and RYIN…IPYW. A disordered region spans residues 235-260; that stretch reads KYTQTKKRVESKVKEPLQNDSVPPRS. Residues 241 to 251 are compositionally biased toward basic and acidic residues; the sequence is KRVESKVKEPL.

It localises to the cell projection. It is found in the cilium. The protein resides in the flagellum. Its subcellular location is the cytoplasm. This chain is Doublecortin domain-containing protein 2C, found in Mus musculus (Mouse).